The following is a 526-amino-acid chain: Organic cation/carnitine transporter 4 (526 aa).

Residues 1-52 (MESPEDRNGNDVRQPLLEKIPVKKEAEGEERLCIDEMLQRYCGEFGRWQLKH) lie on the Cytoplasmic side of the membrane. Residues 53 to 73 (FVLTCIAWALEAFHTMVMIFA) form a helical membrane-spanning segment. Over 74–123 (DQEPEWRCVGSDCRVGSLNCELDPSSWEWTAGKGSSTVSEWGLICGDKYK) the chain is Extracellular. Residues 124-144 (VGLVQALFFAGCMIGAGVFGH) form a helical membrane-spanning segment. The Cytoplasmic segment spans residues 145-153 (LSDSKLGRK). Residues 154–174 (GSLTVVCIINAIFGIATAFSP) traverse the membrane as a helical segment. Residues 175-179 (NYWTY) lie on the Extracellular side of the membrane. A helical transmembrane segment spans residues 180-200 (VVLRFLTGFSTGGVGLTAFVL). 201 to 208 (ATEPIGPS) is an ATP binding site. At 201 to 214 (ATEPIGPSKRGVAG) the chain is on the cytoplasmic side. A helical membrane pass occupies residues 215-235 (MSTFYFFSAGIAVLSGIAYVF). The Extracellular segment spans residues 236-240 (RSWRE). The chain crosses the membrane as a helical span at residues 241 to 261 (LFIVSSLPSLLFLLIVIPFIS). The Cytoplasmic portion of the chain corresponds to 262–331 (ESPRWYLVRG…ILSPLMRMRL (70 aa)). The chain crosses the membrane as a helical span at residues 332-352 (VISVAISFTVSIVYYGLSLNV). The Extracellular portion of the chain corresponds to 353 to 360 (GNLKTNLY). Residues 361–381 (LNVFVNAVSEMPAFAITAVLL) traverse the membrane as a helical segment. The Cytoplasmic segment spans residues 382–390 (DKYGRKPLS). Residues 391-411 (IGTQWFSCVFCLVGFSVWGAG) traverse the membrane as a helical segment. Residues 412-418 (PWKSVRM) are Extracellular-facing. Residues 419 to 439 (VSGVLGIFGMAGTYNLLFIYI) traverse the membrane as a helical segment. The Cytoplasmic segment spans residues 440–451 (AELFPTVVRNAA). A helical membrane pass occupies residues 452–472 (LGCATQAAQMGAILAPFVVVL). Residues 473–475 (GEE) lie on the Extracellular side of the membrane. A helical transmembrane segment spans residues 476–496 (LPFGVFAVCGLVGGGLAFYLP). The Cytoplasmic portion of the chain corresponds to 497–526 (ETLNKPLYDTMFGMHEAESESNRERGEVIC).

This sequence belongs to the major facilitator (TC 2.A.1) superfamily. Organic cation transporter (TC 2.A.1.19) family. As to expression, mostly expressed in siliques, and, to a lower extent, in stems, leaves, flowers and siliques. Present in pollen. In the stems of secondary inflorescences present in the phloem cells and xylem parenchyma cells.

The protein localises to the vacuole membrane. Functionally, high affinity carnitine transporter involved in the active cellular uptake of carnitine. Also transports organic cations. The chain is Organic cation/carnitine transporter 4 (OCT4) from Arabidopsis thaliana (Mouse-ear cress).